The sequence spans 86 residues: Mu-theraphotoxin-Cg2a 2 (86 aa).

The signal sequence occupies residues 1–21 (MKVSVVITLAVLGVMFVWASA). The propeptide occupies 22–50 (AELEERGSDQRDSPAWIKSMERIFQSEER). 3 disulfides stabilise this stretch: cysteine 52–cysteine 66, cysteine 59–cysteine 71, and cysteine 65–cysteine 78. Phenylalanine amide is present on phenylalanine 84.

It belongs to the neurotoxin 10 (Hwtx-1) family. 37 (Jztx-31) subfamily. In terms of tissue distribution, expressed by the venom gland.

It is found in the secreted. In terms of biological role, inhibits both peak current and fast inactivation of voltage-gated sodium channels (Nav) channels. Inhibits the inactivation of Nav on DRG neurons (EC(50)=1.77 uM) and peak current of cardiac myocytes (IC(50)=0.90 uM). This is Mu-theraphotoxin-Cg2a 2 from Chilobrachys guangxiensis (Chinese earth tiger tarantula).